We begin with the raw amino-acid sequence, 493 residues long: EGF-containing fibulin-like extracellular matrix protein 1 (493 aa).

Positions 1 to 17 (MLQTVFLTMLTLALVKS) are cleaved as a signal peptide. The region spanning 26–71 (YTQCTDGYEWDPVRQQCKDIDECDIVPDACKGGMKCVNHYGGYLCL) is the EGF-like 1; atypical domain. Residues 173-213 (DIDECTSGTHNCRLDQVCINLRGSFTCHCLPGYQKRGEQCV) form the EGF-like 2; calcium-binding domain. 15 cysteine pairs are disulfide-bonded: Cys177-Cys190, Cys184-Cys199, Cys201-Cys212, Cys218-Cys228, Cys224-Cys237, Cys239-Cys252, Cys258-Cys268, Cys264-Cys277, Cys279-Cys292, Cys298-Cys309, Cys305-Cys318, Cys320-Cys332, Cys338-Cys350, Cys344-Cys359, and Cys365-Cys377. An EGF-like 3; calcium-binding domain is found at 214-253 (DIDECSVPPYCHQGCVNTPGSFYCQCNPGFQLAANNYTCV). Asn249 is a glycosylation site (N-linked (GlcNAc...) asparagine). The EGF-like 4; calcium-binding domain occupies 254-293 (DINECDASNQCAQQCYNILGSFICQCNQGYELSSDRLNCE). The interval 259 to 493 (DASNQCAQQC…LTIIVGPFSF (235 aa)) is mediates interaction with TIMP3. The EGF-like 5; calcium-binding domain occupies 294-333 (DIDECRTSSYLCQYQCVNEPGKFSCMCPQGYQVVRSRTCQ). The EGF-like 6; calcium-binding domain maps to 334-378 (DINECETTNECREDEMCWNYHGGFRCYPQNPCQDPYVLTSENRCV).

The protein belongs to the fibulin family. In terms of assembly, interacts with ECM1. Interacts with TIMP3. In terms of tissue distribution, expressed by olfactory ensheathing cells (at protein level). Detected in lung, intestine and kidney.

Its subcellular location is the secreted. It localises to the extracellular space. The protein resides in the extracellular matrix. In terms of biological role, binds EGFR, the EGF receptor, inducing EGFR autophosphorylation and the activation of downstream signaling pathways. May play a role in cell adhesion and migration. May function as a negative regulator of chondrocyte differentiation. In the olfactory epithelium, it may regulate glial cell migration, differentiation and the ability of glial cells to support neuronal neurite outgrowth. The polypeptide is EGF-containing fibulin-like extracellular matrix protein 1 (Efemp1) (Rattus norvegicus (Rat)).